The following is a 555-amino-acid chain: Protection of telomeres protein 1 (555 aa).

Belongs to the telombin family. In terms of assembly, self-associates. Interacts with ccq1, poz1 and tpz1.

Its subcellular location is the nucleus. It is found in the chromosome. The protein resides in the telomere. In terms of biological role, single-stranded telomeric DNA-binding protein that is required to protect the 3'-end telomeric overhang. It binds the consensus sequence 5'-GGTTAC-3'. Regulates telomerase and telomere length. This is Protection of telomeres protein 1 (pot1) from Schizosaccharomyces pombe (strain 972 / ATCC 24843) (Fission yeast).